We begin with the raw amino-acid sequence, 257 residues long: Diacetyl reductase [(S)-acetoin forming] (257 aa).

6–30 (IITGAAGGLGKGIAERLANDGFNIV) is a binding site for NAD(+). Ser-139 is a binding site for substrate. The Proton acceptor role is filled by Tyr-152. Lys-156 is a catalytic residue.

It belongs to the short-chain dehydrogenases/reductases (SDR) family.

It carries out the reaction (S)-acetoin + NAD(+) = diacetyl + NADH + H(+). Functionally, catalyzes the irreversible reduction of 2,3-butanediol to (S)-acetoin in the presence of NADH. The sequence is that of Diacetyl reductase [(S)-acetoin forming] (butA) from Staphylococcus epidermidis (strain ATCC 12228 / FDA PCI 1200).